Consider the following 549-residue polypeptide: Oxygen-dependent choline dehydrogenase (549 aa).

Asp4–Glu33 is an FAD binding site. Catalysis depends on His465, which acts as the Proton acceptor.

The protein belongs to the GMC oxidoreductase family. The cofactor is FAD.

The catalysed reaction is choline + A = betaine aldehyde + AH2. It catalyses the reaction betaine aldehyde + NAD(+) + H2O = glycine betaine + NADH + 2 H(+). It functions in the pathway amine and polyamine biosynthesis; betaine biosynthesis via choline pathway; betaine aldehyde from choline (cytochrome c reductase route): step 1/1. Functionally, involved in the biosynthesis of the osmoprotectant glycine betaine. Catalyzes the oxidation of choline to betaine aldehyde and betaine aldehyde to glycine betaine at the same rate. The protein is Oxygen-dependent choline dehydrogenase of Sinorhizobium medicae (strain WSM419) (Ensifer medicae).